Reading from the N-terminus, the 187-residue chain is MSNTAYIDTCYGPVADDVIQRAANIRLLICDVDGVMSDGLIYMGNQGEELKAFNVRDGYGIRCLITSDIDVAIITGRRAKLLEDRANTLGITHLYQGQSDKLVAYHELLATLQCQPEQVAYIGDDLIDWPVMAQVGLSVAVADAHPLLLPKAHYVTRIKGGRGAVREVCDLILLAQDKLEGATGLSI.

Mg(2+) is bound by residues Asp31 and Asp33. Residues Asp33, 54–58 (NVRDG), Arg62, Arg77, Arg85, and Lys101 each bind substrate. Residue Asp124 coordinates Mg(2+).

Belongs to the KdsC family. Homotetramer. Mg(2+) is required as a cofactor.

It catalyses the reaction 3-deoxy-alpha-D-manno-2-octulosonate-8-phosphate + H2O = 3-deoxy-alpha-D-manno-oct-2-ulosonate + phosphate. It functions in the pathway carbohydrate biosynthesis; 3-deoxy-D-manno-octulosonate biosynthesis; 3-deoxy-D-manno-octulosonate from D-ribulose 5-phosphate: step 3/3. Its pathway is bacterial outer membrane biogenesis; lipopolysaccharide biosynthesis. Its function is as follows. Catalyzes the hydrolysis of 3-deoxy-D-manno-octulosonate 8-phosphate (KDO 8-P) to 3-deoxy-D-manno-octulosonate (KDO) and inorganic phosphate. The chain is 3-deoxy-D-manno-octulosonate 8-phosphate phosphatase KdsC (kdsC) from Yersinia pestis.